We begin with the raw amino-acid sequence, 251 residues long: Derlin-1 (251 aa).

Position 2 is an N-acetylserine (Ser-2). Residues 2-15 (SDIGDWFRSIPAIT) are Cytoplasmic-facing. A helical membrane pass occupies residues 16–31 (RYWFAATVAVPLVGKL). The Lumenal portion of the chain corresponds to 32–69 (GLISPAYLFLWPEAFLYRFQIWRPITATFYFPVGPGTG). Residues 70 to 89 (FLYLVNLYFLYHYSTRLETG) traverse the membrane as a helical segment. Residues 90–94 (AFDGR) lie on the Cytoplasmic side of the membrane. Residues 95-115 (PADYLFMLLFNWICIVITGLA) traverse the membrane as a helical segment. At 116–122 (MDMQLLM) the chain is on the lumenal side. The chain crosses the membrane as a helical span at residues 123 to 137 (IPLIMSVLYVWAQLN). At 138–154 (RDMIVSFWFGTRFKACY) the chain is on the cytoplasmic side. The helical transmembrane segment at 155 to 166 (LPWVILGFNYII) threads the bilayer. Residues 167–170 (GGSV) are Lumenal-facing. Residues 171-189 (INELIGNLVGHLYFFLMFR) form a helical membrane-spanning segment. The Cytoplasmic portion of the chain corresponds to 190–251 (YPMDLGGRNF…WGQGFRLGDQ (62 aa)). Ser-201 is modified (phosphoserine). Phosphothreonine is present on Thr-202. At Ser-226 the chain carries Phosphoserine. A disordered region spans residues 229-251 (RAADQNGGGGRHNWGQGFRLGDQ). The SHP-box motif lies at 241–248 (NWGQGFRL).

The protein belongs to the derlin family. Homotetramer. The four subunits of the tetramer are arranged in a twofold symmetry. Forms homo- and heterooligomers with DERL2 and DERL3; binding to DERL3 is poorer than that between DERL2 and DERL3. Interacts (via SHP-box motif) with VCP. Interacts with AMFR, SELENOS, SEL1L, SELENOK and SYVN1, as well as with SEL1L-SYVN1 and VCP-SELENOS protein complexes; this interaction is weaker than that observed between DERL2 and these complexes. Interacts with NGLY1 and YOD1. Does not bind to EDEM1. Interacts with DNAJB9. Interacts with RNF103. Interacts with HM13. Interacts with XBP1 isoform 1 (via luminal/ectodomain domain); the interaction obviates the need for ectodomain shedding prior HM13/SPP-mediated XBP1 isoform 1 cleavage. Interacts with the signal recognition particle/SRP and the SRP receptor; in the process of endoplasmic reticulum stress-induced pre-emptive quality control. May interact with UBXN6. Interacts with ZFAND2B; probably through VCP. Interacts with CCDC47. Interacts with C18orf32. May interact with TRAM1. Forms a complex with SVIP and VCP/p97.

Its subcellular location is the endoplasmic reticulum membrane. Its function is as follows. Functional component of endoplasmic reticulum-associated degradation (ERAD) for misfolded lumenal proteins. Forms homotetramers which encircle a large channel traversing the endoplasmic reticulum (ER) membrane. This allows the retrotranslocation of misfolded proteins from the ER into the cytosol where they are ubiquitinated and degraded by the proteasome. The channel has a lateral gate within the membrane which provides direct access to membrane proteins with no need to reenter the ER lumen first. May mediate the interaction between VCP and the misfolded protein. Also involved in endoplasmic reticulum stress-induced pre-emptive quality control, a mechanism that selectively attenuates the translocation of newly synthesized proteins into the endoplasmic reticulum and reroutes them to the cytosol for proteasomal degradation. By controlling the steady-state expression of the IGF1R receptor, indirectly regulates the insulin-like growth factor receptor signaling pathway. The chain is Derlin-1 from Pongo abelii (Sumatran orangutan).